The chain runs to 282 residues: NH(3)-dependent NAD(+) synthetase (282 aa).

Position 51–58 (51–58 (GISGGVDS)) interacts with ATP. A Mg(2+)-binding site is contributed by D57. Residue R148 coordinates deamido-NAD(+). T168 provides a ligand contact to ATP. E173 provides a ligand contact to Mg(2+). Deamido-NAD(+)-binding residues include K181 and D188. ATP contacts are provided by K197 and T219. 268–269 (HK) lines the deamido-NAD(+) pocket.

It belongs to the NAD synthetase family. Homodimer.

It carries out the reaction deamido-NAD(+) + NH4(+) + ATP = AMP + diphosphate + NAD(+) + H(+). It functions in the pathway cofactor biosynthesis; NAD(+) biosynthesis; NAD(+) from deamido-NAD(+) (ammonia route): step 1/1. Its function is as follows. Catalyzes the ATP-dependent amidation of deamido-NAD to form NAD. Uses ammonia as a nitrogen source. This Burkholderia lata (strain ATCC 17760 / DSM 23089 / LMG 22485 / NCIMB 9086 / R18194 / 383) protein is NH(3)-dependent NAD(+) synthetase.